We begin with the raw amino-acid sequence, 644 residues long: Alkyldihydroxyacetonephosphate synthase, peroxisomal (644 aa).

The N-terminal 44 residues, 1–44, are a transit peptide targeting the peroxisome; that stretch reads MAEAAGEAGASERDPDAVRARRRLRVLSGHLLGRPQEAPSTNEC. The tract at residues 1–70 is disordered; that stretch reads MAEAAGEAGA…PAAPESGTIP (70 aa). Positions 10 to 19 are enriched in basic and acidic residues; that stretch reads ASERDPDAVR. Low complexity predominate over residues 49–64; sequence AASAAGASPAASPAAP. Phosphoserine is present on residues Ser-51 and Ser-56. N6-acetyllysine is present on Lys-88. Residues 188-370 enclose the FAD-binding PCMH-type domain; that stretch reads FERIPDIVVW…TEATIKIRPT (183 aa). FAD-binding positions include 220-226, 289-295, and 302-305; these read PIGGGTS, DSLEFSI, and TRAS. N6-acetyllysine is present on Lys-333. 354-360 serves as a coordination point for FAD; the sequence is EGTLGVI. Position 501 (Arg-501) interacts with substrate. The Proton donor/acceptor role is filled by Tyr-564. Important for enzyme activity stretches follow at residues 601-603 and 640-644; these read HHH and NRNLL.

It belongs to the FAD-binding oxidoreductase/transferase type 4 family. Homodimer. FAD is required as a cofactor.

The protein localises to the peroxisome membrane. Its subcellular location is the peroxisome. It carries out the reaction a long chain fatty alcohol + a 1-acylglycerone 3-phosphate = a 1-O-alkylglycerone 3-phosphate + a long-chain fatty acid + H(+). The enzyme catalyses hexadecan-1-ol + 1-hexadecanoylglycerone 3-phosphate = 1-O-hexadecylglycerone 3-phosphate + hexadecanoate + H(+). It catalyses the reaction 1-hexadecanoylglycerone 3-phosphate + a long-chain fatty acid = a 1-acylglycerone 3-phosphate + hexadecanoate. Its pathway is glycerolipid metabolism; ether lipid biosynthesis. With respect to regulation, inhibited by divalent cation Mg(2+). Functionally, catalyzes the exchange of the acyl chain in acyl-dihydroxyacetonephosphate (acyl-DHAP) for a long chain fatty alcohol, yielding the first ether linked intermediate, i.e. alkyl-dihydroxyacetonephosphate (alkyl-DHAP), in the pathway of ether lipid biosynthesis. The sequence is that of Alkyldihydroxyacetonephosphate synthase, peroxisomal (Agps) from Rattus norvegicus (Rat).